Reading from the N-terminus, the 217-residue chain is Orotidine 5'-phosphate decarboxylase (217 aa).

Substrate is bound by residues Asp14, Lys36, 64-73 (DFKVADIPST), Ser120, 172-182 (PGVGAQGGNLS), Gly197, and Arg198. The active-site Proton donor is the Lys66.

The protein belongs to the OMP decarboxylase family. Type 1 subfamily. In terms of assembly, homodimer.

The catalysed reaction is orotidine 5'-phosphate + H(+) = UMP + CO2. It participates in pyrimidine metabolism; UMP biosynthesis via de novo pathway; UMP from orotate: step 2/2. Functionally, catalyzes the decarboxylation of orotidine 5'-monophosphate (OMP) to uridine 5'-monophosphate (UMP). This is Orotidine 5'-phosphate decarboxylase from Methanococcus maripaludis (strain C6 / ATCC BAA-1332).